A 402-amino-acid chain; its full sequence is Imidazolonepropionase (402 aa).

2 residues coordinate Fe(3+): His66 and His68. Residues His66 and His68 each coordinate Zn(2+). Arg75, Tyr138, and His171 together coordinate 4-imidazolone-5-propanoate. N-formimidoyl-L-glutamate is bound at residue Tyr138. Residue His236 participates in Fe(3+) binding. His236 is a binding site for Zn(2+). Gln239 is a binding site for 4-imidazolone-5-propanoate. Residue Asp311 participates in Fe(3+) binding. Asp311 contributes to the Zn(2+) binding site. 2 residues coordinate N-formimidoyl-L-glutamate: Asn313 and Gly315. Thr316 provides a ligand contact to 4-imidazolone-5-propanoate.

This sequence belongs to the metallo-dependent hydrolases superfamily. HutI family. It depends on Zn(2+) as a cofactor. The cofactor is Fe(3+).

Its subcellular location is the cytoplasm. The catalysed reaction is 4-imidazolone-5-propanoate + H2O = N-formimidoyl-L-glutamate. It functions in the pathway amino-acid degradation; L-histidine degradation into L-glutamate; N-formimidoyl-L-glutamate from L-histidine: step 3/3. Catalyzes the hydrolytic cleavage of the carbon-nitrogen bond in imidazolone-5-propanoate to yield N-formimidoyl-L-glutamate. It is the third step in the universal histidine degradation pathway. The polypeptide is Imidazolonepropionase (Vibrio cholerae serotype O1 (strain ATCC 39541 / Classical Ogawa 395 / O395)).